A 305-amino-acid polypeptide reads, in one-letter code: MNSENTQIVAALYKFVKLPDFAQKRDPLLSYCQAQGVKGTILLAQEGINGTIAGSRQAIDSVLWFLRSDPRLADLEYKESYTETPPFERMKVRLKSEIVTLGLPEIDPTEKVGTYVSPQEWNDLICDPEVTVIDTRNDYEVNIGTFQGAENPQTGSFREFPDYVVHNLDPTKHKKVALFCTGGIRCEKASSFMLAQGFAEVYHLKGGILKYLEEVPAQESLWQGECFVFDERVAVSHGLEEGSYELCFCCGYPISEEDKISPKYEQGISCAYCFDSLTEEKRARQQEKWRHYQTQVANSKNRDVS.

Residues 126–220 (CDPEVTVIDT…YLEEVPAQES (95 aa)) enclose the Rhodanese domain. Cysteine 180 (cysteine persulfide intermediate) is an active-site residue.

It belongs to the TrhO family.

It carries out the reaction uridine(34) in tRNA + AH2 + O2 = 5-hydroxyuridine(34) in tRNA + A + H2O. Functionally, catalyzes oxygen-dependent 5-hydroxyuridine (ho5U) modification at position 34 in tRNAs. This Nostoc punctiforme (strain ATCC 29133 / PCC 73102) protein is tRNA uridine(34) hydroxylase.